A 273-amino-acid chain; its full sequence is 4-hydroxy-tetrahydrodipicolinate reductase (273 aa).

Residues 12–17 (GAGGRM) and glutamate 38 each bind NAD(+). Residue arginine 39 participates in NADP(+) binding. NAD(+)-binding positions include 102-104 (GTT) and 126-129 (AANF). The active-site Proton donor/acceptor is histidine 159. Histidine 160 provides a ligand contact to (S)-2,3,4,5-tetrahydrodipicolinate. Catalysis depends on lysine 163, which acts as the Proton donor. 169–170 (GT) contributes to the (S)-2,3,4,5-tetrahydrodipicolinate binding site.

This sequence belongs to the DapB family. As to quaternary structure, homotetramer.

It is found in the cytoplasm. It catalyses the reaction (S)-2,3,4,5-tetrahydrodipicolinate + NAD(+) + H2O = (2S,4S)-4-hydroxy-2,3,4,5-tetrahydrodipicolinate + NADH + H(+). The enzyme catalyses (S)-2,3,4,5-tetrahydrodipicolinate + NADP(+) + H2O = (2S,4S)-4-hydroxy-2,3,4,5-tetrahydrodipicolinate + NADPH + H(+). The protein operates within amino-acid biosynthesis; L-lysine biosynthesis via DAP pathway; (S)-tetrahydrodipicolinate from L-aspartate: step 4/4. Its function is as follows. Catalyzes the conversion of 4-hydroxy-tetrahydrodipicolinate (HTPA) to tetrahydrodipicolinate. The sequence is that of 4-hydroxy-tetrahydrodipicolinate reductase from Escherichia coli O139:H28 (strain E24377A / ETEC).